We begin with the raw amino-acid sequence, 503 residues long: DnaJ homolog subfamily C member 3 (503 aa).

An N-terminal signal peptide occupies residues 1 to 31; the sequence is MVSAAASAGRLGSALPFLLVLLDLQYQGAEC. 9 TPR repeats span residues 37 to 70, 71 to 104, 105 to 137, 153 to 186, 187 to 220, 221 to 254, 267 to 300, 305 to 338, and 339 to 372; these read VEKQ…DSDN, YIAY…KQDF, TSRL…NPSN, LQRL…CVWD, AELR…KSDN, TEAF…DQDH, LNKQ…EPDV, TRAK…EPTN, and VNAL…SEND. A disulfide bond links C247 and C257. A disulfide bond links C312 and C328. The interval 374 to 392 is flexible linker; it reads QIREGLERAQRMLKQSQKR. The J domain occupies 393-461; it reads DYYKILGVKR…EMRRKFDAGE (69 aa).

The protein localises to the endoplasmic reticulum. In terms of biological role, may be involved in the unfolded protein response (UPR) during ER stress. This chain is DnaJ homolog subfamily C member 3 (DNAJC3), found in Gallus gallus (Chicken).